The following is a 720-amino-acid chain: Inactive serine protease PAMR1 (720 aa).

Positions 1–21 are cleaved as a signal peptide; it reads MELGCWTQLGLTFLQLLLISS. Intrachain disulfides connect C128–C150, C177–C199, C239–C250, C244–C260, C262–C271, C280–C329, C315–C342, C414–C442, and C489–C505. Residues 128–236 form the CUB domain; it reads CGQVLRAPKG…DGFHAIYEEI (109 aa). An EGF-like domain is found at 235 to 272; it reads EITACSSSPCFHDGTCVLDKAGSYKCACLAGYTGQRCE. Sushi domains are found at residues 278 to 344 and 387 to 444; these read RNCS…ICIK and APTK…SCIP. The 276-residue stretch at 445 to 720 folds into the Peptidase S1 domain; it reads ICGKIENITA…FKDWIERNMK (276 aa). N-linked (GlcNAc...) asparagine glycosylation is present at N614. 2 disulfides stabilise this stretch: C630–C649 and C661–C697.

It belongs to the peptidase S1 family.

The protein localises to the secreted. Functionally, may play a role in regeneration of skeletal muscle. In Homo sapiens (Human), this protein is Inactive serine protease PAMR1 (PAMR1).